Here is a 292-residue protein sequence, read N- to C-terminus: N-acetylneuraminate lyase (292 aa).

Positions 47 and 48 each coordinate aceneuramate. Tyr136 (proton donor) is an active-site residue. Lys164 acts as the Schiff-base intermediate with substrate in catalysis. Thr166, Gly188, Asp190, Glu191, and Ser207 together coordinate aceneuramate.

Belongs to the DapA family. NanA subfamily. Homotetramer.

Its subcellular location is the cytoplasm. It carries out the reaction aceneuramate = aldehydo-N-acetyl-D-mannosamine + pyruvate. Its pathway is amino-sugar metabolism; N-acetylneuraminate degradation; D-fructose 6-phosphate from N-acetylneuraminate: step 1/5. Its function is as follows. Catalyzes the reversible aldol cleavage of N-acetylneuraminic acid (sialic acid; Neu5Ac) to form pyruvate and N-acetylmannosamine (ManNAc) via a Schiff base intermediate. In Actinobacillus pleuropneumoniae serotype 3 (strain JL03), this protein is N-acetylneuraminate lyase.